A 564-amino-acid chain; its full sequence is MSSAQSSIDSDGDVRDADIHVAPPVEKEWSDGFDDNEVINGDNVEPPKRGLIGYLVIYLLCYPISFGGFLPGWDSGITAGFINMDNFKMNFGSYKHSTGEYYLSNVRMGLLVAMFSIGCAIGGLIFARLADTLGRRLAIVIVVLVYMVGAIIQISSNHKWYQYFVGKIIYGLGAGGCSVLCPMLLSEIAPTDLRGGLVSLYQLNMTFGIFLGYCSVYGTRKYDNTAQWRVPLGLCFLWALIIIIGMLLVPESPRYLIECERHEEARASIAKINKVSPEDPWVLKQADEINAGVLAQRELGEASWKELFSVKTKVLQRLITGILVQTFLQLTGENYFFFYGTTIFKSVGLTDGFETSIVLGTVNFFSTIIAVMVVDKIGRRKCLLFGAAGMMACMVIFASIGVKCLYPHGQDGPSSKGAGNAMIVFTCFYIFCFATTWAPVAYIVVAESFPSKVKSRAMSISTACNWLWQFLIGFFTPFITGSIHFYYGYVFVGCLVAMFLYVFFFLPETIGLSLEEIQLLYEEGIKPWKSASWVPPSRRGISSEESKTEKKDWKKFLKFSKNSD.

The Cytoplasmic portion of the chain corresponds to Met-1 to Ile-52. The helical transmembrane segment at Gly-53–Trp-73 threads the bilayer. Residues Asp-74–Gly-109 are Extracellular-facing. Residues Leu-110–Ala-130 traverse the membrane as a helical segment. Topologically, residues Asp-131 to Arg-136 are cytoplasmic. A helical transmembrane segment spans residues Leu-137–Asn-157. Topologically, residues His-158–Lys-167 are extracellular. Residues Ile-168–Ile-188 traverse the membrane as a helical segment. The Cytoplasmic portion of the chain corresponds to Ala-189–Arg-194. The chain crosses the membrane as a helical span at residues Gly-195–Ser-215. At Val-216–Arg-229 the chain is on the extracellular side. A helical membrane pass occupies residues Val-230–Pro-250. Residues Glu-251–Glu-333 lie on the Cytoplasmic side of the membrane. A helical transmembrane segment spans residues Asn-334–Thr-350. Residues Asp-351–Ser-356 are Extracellular-facing. Residues Ile-357–Val-374 form a helical membrane-spanning segment. Over Asp-375–Lys-381 the chain is Cytoplasmic. The chain crosses the membrane as a helical span at residues Cys-382–Val-402. The Extracellular portion of the chain corresponds to Lys-403 to Val-424. The helical transmembrane segment at Phe-425–Val-445 threads the bilayer. The Cytoplasmic portion of the chain corresponds to Ala-446–Thr-462. The chain crosses the membrane as a helical span at residues Ala-463–Ile-483. Position 484 (His-484) is a topological domain, extracellular. A helical membrane pass occupies residues Phe-485–Phe-505. The Cytoplasmic portion of the chain corresponds to Leu-506–Asp-564. Positions Ser-530 to Lys-551 are disordered. A compositionally biased stretch (basic and acidic residues) spans Ile-541 to Lys-551.

Belongs to the major facilitator superfamily. Sugar transporter (TC 2.A.1.1) family.

It is found in the membrane. Probable glucose transporter. The polypeptide is Hexose transporter HXT13 (HXT13) (Saccharomyces cerevisiae (strain ATCC 204508 / S288c) (Baker's yeast)).